The primary structure comprises 156 residues: Ribosomal RNA large subunit methyltransferase H (156 aa).

S-adenosyl-L-methionine contacts are provided by residues Leu72, Gly104, and 123–128 (LSEMTL).

The protein belongs to the RNA methyltransferase RlmH family. Homodimer.

The protein localises to the cytoplasm. It catalyses the reaction pseudouridine(1915) in 23S rRNA + S-adenosyl-L-methionine = N(3)-methylpseudouridine(1915) in 23S rRNA + S-adenosyl-L-homocysteine + H(+). Functionally, specifically methylates the pseudouridine at position 1915 (m3Psi1915) in 23S rRNA. The polypeptide is Ribosomal RNA large subunit methyltransferase H (Syntrophotalea carbinolica (strain DSM 2380 / NBRC 103641 / GraBd1) (Pelobacter carbinolicus)).